The following is a 77-amino-acid chain: Spermatid-specific protein T2 (77 aa).

A hydrophobic region spans residues 1–21 (MKVAANTSKMLVEKLDLLKGG). The tract at residues 1–77 (MKVAANTSKM…YSRRRYRRRR (77 aa)) is disordered. Positions 20-77 (GGRRRRRRSRRRRRSRRRRSRSPYRRRYRRRRRRRRSRRRRRYRRRRSYSRRRYRRRR) are enriched in basic residues.

Phosphorylation occurs at different degrees. The triphosphorylated form may be predominant in T2. SP2 appears to be phosphorylated in elongated spermatids, but dephosphorylated in mature sperm cells. In terms of tissue distribution, testis.

The protein resides in the nucleus. Its subcellular location is the chromosome. Its function is as follows. Cuttlefish spermiogenesis is characterized by a double nuclear protein transition: histones -&gt; spermatid-specific proteins (T1/T2) -&gt; protamines (SP1/SP2). The protamines compact sperm DNA into a highly condensed, stable and inactive complex. This chain is Spermatid-specific protein T2, found in Sepia officinalis (Common cuttlefish).